Consider the following 162-residue polypeptide: Probable chemoreceptor glutamine deamidase CheD (162 aa).

It belongs to the CheD family.

The enzyme catalyses L-glutaminyl-[protein] + H2O = L-glutamyl-[protein] + NH4(+). Functionally, probably deamidates glutamine residues to glutamate on methyl-accepting chemotaxis receptors (MCPs), playing an important role in chemotaxis. In Clostridium botulinum (strain ATCC 19397 / Type A), this protein is Probable chemoreceptor glutamine deamidase CheD.